The chain runs to 300 residues: uncharacterized protein (300 aa).

The protein belongs to the chlamydial CPn_0593/CT_474/TC_0759 family.

This is an uncharacterized protein from Chlamydia muridarum (strain MoPn / Nigg).